Reading from the N-terminus, the 609-residue chain is Proline--tRNA ligase (609 aa).

This sequence belongs to the class-II aminoacyl-tRNA synthetase family. ProS type 1 subfamily. Homodimer.

It localises to the cytoplasm. It catalyses the reaction tRNA(Pro) + L-proline + ATP = L-prolyl-tRNA(Pro) + AMP + diphosphate. Functionally, catalyzes the attachment of proline to tRNA(Pro) in a two-step reaction: proline is first activated by ATP to form Pro-AMP and then transferred to the acceptor end of tRNA(Pro). As ProRS can inadvertently accommodate and process non-cognate amino acids such as alanine and cysteine, to avoid such errors it has two additional distinct editing activities against alanine. One activity is designated as 'pretransfer' editing and involves the tRNA(Pro)-independent hydrolysis of activated Ala-AMP. The other activity is designated 'posttransfer' editing and involves deacylation of mischarged Ala-tRNA(Pro). The misacylated Cys-tRNA(Pro) is not edited by ProRS. The sequence is that of Proline--tRNA ligase from Synechococcus sp. (strain JA-2-3B'a(2-13)) (Cyanobacteria bacterium Yellowstone B-Prime).